The primary structure comprises 331 residues: 6-phosphogluconolactonase (331 aa).

The protein belongs to the cycloisomerase 2 family.

The enzyme catalyses 6-phospho-D-glucono-1,5-lactone + H2O = 6-phospho-D-gluconate + H(+). The protein operates within carbohydrate degradation; pentose phosphate pathway; D-ribulose 5-phosphate from D-glucose 6-phosphate (oxidative stage): step 2/3. Functionally, catalyzes the hydrolysis of 6-phosphogluconolactone to 6-phosphogluconate. The protein is 6-phosphogluconolactonase of Sodalis glossinidius (strain morsitans).